A 413-amino-acid chain; its full sequence is GDP-mannose-dependent alpha-mannosyltransferase (413 aa).

This sequence belongs to the glycosyltransferase group 1 family.

It participates in phospholipid metabolism; phosphatidylinositol metabolism. In terms of biological role, catalyzes the addition of a mannose residue from GDP-D-mannose to GlcAGroAc2 to generate 1,2-di-O-C16/C18:1-(alpha-D-mannopyranosyl)-(1-4)-(alpha-D-glucopyranosyluronic acid)-(1-3)-glycerol(ManGlcAGroAc2). This is GDP-mannose-dependent alpha-mannosyltransferase (mgtA) from Corynebacterium glutamicum (strain ATCC 13032 / DSM 20300 / JCM 1318 / BCRC 11384 / CCUG 27702 / LMG 3730 / NBRC 12168 / NCIMB 10025 / NRRL B-2784 / 534).